The primary structure comprises 197 residues: Imidazoleglycerol-phosphate dehydratase (197 aa).

The protein belongs to the imidazoleglycerol-phosphate dehydratase family.

The protein resides in the cytoplasm. The enzyme catalyses D-erythro-1-(imidazol-4-yl)glycerol 3-phosphate = 3-(imidazol-4-yl)-2-oxopropyl phosphate + H2O. The protein operates within amino-acid biosynthesis; L-histidine biosynthesis; L-histidine from 5-phospho-alpha-D-ribose 1-diphosphate: step 6/9. In Xanthobacter autotrophicus (strain ATCC BAA-1158 / Py2), this protein is Imidazoleglycerol-phosphate dehydratase.